Reading from the N-terminus, the 181-residue chain is Protein csk22 (181 aa).

The next 5 helical transmembrane spans lie at 5–22, 35–57, 61–78, 91–113, and 140–162; these read LQSV…YKKI, WLFT…SAIH, YGYL…VFFA, IYFR…RFLY, and LTIG…IIKL.

It is found in the cell membrane. This Bacillus subtilis (strain 168) protein is Protein csk22 (csk22).